Consider the following 1071-residue polypeptide: ATP-dependent helicase/deoxyribonuclease subunit B (1071 aa).

The protein belongs to the helicase family. AddB/RexB type 2 subfamily. In terms of assembly, heterodimer of AddA and RexB. Mg(2+) is required as a cofactor.

In terms of biological role, the heterodimer acts as both an ATP-dependent DNA helicase and an ATP-dependent, dual-direction single-stranded exonuclease. Recognizes the chi site generating a DNA molecule suitable for the initiation of homologous recombination. This subunit has 5' -&gt; 3' nuclease activity but not helicase activity. The chain is ATP-dependent helicase/deoxyribonuclease subunit B from Streptococcus pyogenes serotype M49 (strain NZ131).